We begin with the raw amino-acid sequence, 438 residues long: Ribosomal protein uS12 methylthiotransferase RimO (438 aa).

In terms of domain architecture, MTTase N-terminal spans 1–115 (MKYFILSLGC…LDKLLADLGE (115 aa)). Cys10, Cys46, Cys78, Cys150, Cys154, and Cys157 together coordinate [4Fe-4S] cluster. One can recognise a Radical SAM core domain in the interval 136 to 366 (KSNEVYRYIK…MEVQQEISLN (231 aa)). The 69-residue stretch at 369–437 (KALVGKKIPV…IYDLKGEFIN (69 aa)) folds into the TRAM domain.

The protein belongs to the methylthiotransferase family. RimO subfamily. The cofactor is [4Fe-4S] cluster.

The protein resides in the cytoplasm. It carries out the reaction L-aspartate(89)-[ribosomal protein uS12]-hydrogen + (sulfur carrier)-SH + AH2 + 2 S-adenosyl-L-methionine = 3-methylsulfanyl-L-aspartate(89)-[ribosomal protein uS12]-hydrogen + (sulfur carrier)-H + 5'-deoxyadenosine + L-methionine + A + S-adenosyl-L-homocysteine + 2 H(+). Its function is as follows. Catalyzes the methylthiolation of an aspartic acid residue of ribosomal protein uS12. This chain is Ribosomal protein uS12 methylthiotransferase RimO, found in Carboxydothermus hydrogenoformans (strain ATCC BAA-161 / DSM 6008 / Z-2901).